We begin with the raw amino-acid sequence, 183 residues long: Large ribosomal subunit protein bL32m (183 aa).

Residues 1–71 (MNSLIFGKQL…DFFSNNGILL (71 aa)) constitute a mitochondrion transit peptide. Positions 104, 107, 117, and 120 each coordinate Zn(2+).

The protein belongs to the bacterial ribosomal protein bL32 family. As to quaternary structure, component of the mitochondrial large ribosomal subunit (mt-LSU). Mature yeast 74S mitochondrial ribosomes consist of a small (37S) and a large (54S) subunit. The 37S small subunit contains a 15S ribosomal RNA (15S mt-rRNA) and 34 different proteins. The 54S large subunit contains a 21S rRNA (21S mt-rRNA) and 46 different proteins. bL32m has a zinc binding site. MRPL32 precursor is processed by the m-AAA protease (composed of YTA12/RCA1 and YTA10/AFG3), which cleaves the N-terminal transit peptide. Cleavage by the m-AAA protease takes place prior to assembly into the large subunit, an essential step for mitochondrial ribosome (mitoribosome) assembly. Proper processing by the m-AAA protease is dependent on the zinc-binding region within the tightly folded C-terminal domain of MRPL32: zinc-dependent folding halts degradation initiated from the N-terminus and triggers the release of mature MRPL32.

It is found in the mitochondrion. Component of the mitochondrial ribosome (mitoribosome), a dedicated translation machinery responsible for the synthesis of mitochondrial genome-encoded proteins, including at least some of the essential transmembrane subunits of the mitochondrial respiratory chain. The mitoribosomes are attached to the mitochondrial inner membrane and translation products are cotranslationally integrated into the membrane. The chain is Large ribosomal subunit protein bL32m from Saccharomyces cerevisiae (strain ATCC 204508 / S288c) (Baker's yeast).